The primary structure comprises 710 residues: Polyribonucleotide nucleotidyltransferase (710 aa).

Mg(2+) contacts are provided by Asp489 and Asp495. The 60-residue stretch at 556-615 (PKIDTIKIDVDKIKVVIGKGGETIDKIIAETGVKIDIDDEGNVSIYSSDQAAIDRTKEII) folds into the KH domain. One can recognise an S1 motif domain in the interval 625–693 (GEVYHAKVIR…EKGRVDASMK (69 aa)). The disordered stretch occupies residues 691-710 (SMKALIPRPPKPEKKEEKHD). Over residues 700–710 (PKPEKKEEKHD) the composition is skewed to basic and acidic residues.

This sequence belongs to the polyribonucleotide nucleotidyltransferase family. The cofactor is Mg(2+).

The protein resides in the cytoplasm. The catalysed reaction is RNA(n+1) + phosphate = RNA(n) + a ribonucleoside 5'-diphosphate. Involved in mRNA degradation. Catalyzes the phosphorolysis of single-stranded polyribonucleotides processively in the 3'- to 5'-direction. In Streptococcus pyogenes serotype M18 (strain MGAS8232), this protein is Polyribonucleotide nucleotidyltransferase.